Consider the following 376-residue polypeptide: uncharacterized protein (376 aa).

This sequence belongs to the NAD(P)-dependent epimerase/dehydratase family.

This is an uncharacterized protein from Mycobacterium bovis (strain ATCC BAA-935 / AF2122/97).